The following is a 237-amino-acid chain: Casparian strip membrane protein 2 (237 aa).

The disordered stretch occupies residues 1-48 (MSGSDTSGSVHVDEHGHGHGKASSSYDGAGAPAPAPAPFQGHRKAGSG). At 1-69 (MSGSDTSGSV…GSGGDGLRRC (69 aa)) the chain is on the cytoplasmic side. Residues 70–90 (LGLIDFVLRVAAFGPTLAAAI) traverse the membrane as a helical segment. The Extracellular segment spans residues 91-117 (SIGTSDERLSVFTNYFQFRARFDDFPA). Residues 118-138 (FEFFIVANAIAAGYMVLSLPF) traverse the membrane as a helical segment. Residues 139 to 152 (SAATIMSSKATGVK) are Cytoplasmic-facing. Residues 153–173 (LLLLICDTIMVGLLTAAASAA) form a helical membrane-spanning segment. Residues 174–205 (AAMVYVAHEGNLRANWVPICLQFHGFCQRTSG) are Extracellular-facing. Residues 206 to 226 (AVIASFLAVFVLMVLIVMAAF) traverse the membrane as a helical segment. Residues 227-237 (TMPRRTHHTAS) lie on the Cytoplasmic side of the membrane.

Belongs to the Casparian strip membrane proteins (CASP) family. As to quaternary structure, homodimer and heterodimers.

It localises to the cell membrane. Its function is as follows. Regulates membrane-cell wall junctions and localized cell wall deposition. Required for establishment of the Casparian strip membrane domain (CSD) and the subsequent formation of Casparian strips, a cell wall modification of the root endodermis that determines an apoplastic barrier between the intraorganismal apoplasm and the extraorganismal apoplasm and prevents lateral diffusion. The chain is Casparian strip membrane protein 2 from Oryza sativa subsp. japonica (Rice).